We begin with the raw amino-acid sequence, 342 residues long: DNA primase small subunit PriS (342 aa).

Catalysis depends on residues Asp97, Asp99, and Asp276.

This sequence belongs to the eukaryotic-type primase small subunit family. As to quaternary structure, heterodimer of a small subunit (PriS) and a large subunit (PriL). Mg(2+) is required as a cofactor. It depends on Mn(2+) as a cofactor.

Its function is as follows. Catalytic subunit of DNA primase, an RNA polymerase that catalyzes the synthesis of short RNA molecules used as primers for DNA polymerase during DNA replication. The small subunit contains the primase catalytic core and has DNA synthesis activity on its own. Binding to the large subunit stabilizes and modulates the activity, increasing the rate of DNA synthesis while decreasing the length of the DNA fragments, and conferring RNA synthesis capability. The DNA polymerase activity may enable DNA primase to also catalyze primer extension after primer synthesis. May also play a role in DNA repair. The polypeptide is DNA primase small subunit PriS (Thermococcus sibiricus (strain DSM 12597 / MM 739)).